The primary structure comprises 347 residues: 3,4-dihydroxy-2-butanone 4-phosphate synthase (347 aa).

Residues 1-200 (MPLNRVREAI…ISDLIEYRMQ (200 aa)) are DHBP synthase. D-ribulose 5-phosphate is bound by residues 27–28 (RE), D32, 139–143 (RTGHT), and E163. E28 serves as a coordination point for Mg(2+). H142 is a binding site for Mg(2+). The GTP cyclohydrolase II-like stretch occupies residues 201–347 (NEMLILIKER…IVLQGGPIQL (147 aa)).

In the N-terminal section; belongs to the DHBP synthase family. The protein in the C-terminal section; belongs to the GTP cyclohydrolase II family. Requires Mg(2+) as cofactor. Mn(2+) is required as a cofactor.

It catalyses the reaction D-ribulose 5-phosphate = (2S)-2-hydroxy-3-oxobutyl phosphate + formate + H(+). Its pathway is cofactor biosynthesis; riboflavin biosynthesis; 2-hydroxy-3-oxobutyl phosphate from D-ribulose 5-phosphate: step 1/1. Its function is as follows. Catalyzes the conversion of D-ribulose 5-phosphate to formate and 3,4-dihydroxy-2-butanone 4-phosphate. The chain is 3,4-dihydroxy-2-butanone 4-phosphate synthase (ribB) from Wolinella succinogenes (strain ATCC 29543 / DSM 1740 / CCUG 13145 / JCM 31913 / LMG 7466 / NCTC 11488 / FDC 602W) (Vibrio succinogenes).